The chain runs to 314 residues: Methionyl-tRNA formyltransferase (314 aa).

Residue 112 to 115 (SLLP) participates in (6S)-5,6,7,8-tetrahydrofolate binding.

It belongs to the Fmt family.

It carries out the reaction L-methionyl-tRNA(fMet) + (6R)-10-formyltetrahydrofolate = N-formyl-L-methionyl-tRNA(fMet) + (6S)-5,6,7,8-tetrahydrofolate + H(+). Functionally, attaches a formyl group to the free amino group of methionyl-tRNA(fMet). The formyl group appears to play a dual role in the initiator identity of N-formylmethionyl-tRNA by promoting its recognition by IF2 and preventing the misappropriation of this tRNA by the elongation apparatus. This chain is Methionyl-tRNA formyltransferase, found in Buchnera aphidicola subsp. Acyrthosiphon pisum (strain 5A).